Reading from the N-terminus, the 283-residue chain is Heavy metal-associated isoprenylated plant protein 3 (283 aa).

The span at 1 to 22 (MGEKKNEGDNKKKGGDNKKKNE) shows a compositional bias: basic and acidic residues. Residues 1 to 26 (MGEKKNEGDNKKKGGDNKKKNETPSI) form a disordered region. 2 HMA domains span residues 25 to 88 (SITV…KKKV) and 132 to 195 (VTTA…KRAV). Zn(2+) contacts are provided by cysteine 36 and cysteine 39. Basic and acidic residues predominate over residues 82–129 (EKTKKKVDLVSPQPKKEKEKENKNKNDEDKKKSEEKKKPDNNDKKPKE). The segment at 82-131 (EKTKKKVDLVSPQPKKEKEKENKNKNDEDKKKSEEKKKPDNNDKKPKETP) is disordered. Residues cysteine 143 and cysteine 146 each coordinate Zn(2+). The span at 198–230 (VPPKKEKDKENGNENGEKKKGGGGDGGGKEKTG) shows a compositional bias: basic and acidic residues. The segment at 198–238 (VPPKKEKDKENGNENGEKKKGGGGDGGGKEKTGNKGGGEGV) is disordered. A Cysteine methyl ester modification is found at cysteine 280. Residue cysteine 280 is the site of S-farnesyl cysteine attachment. The propeptide at 281–283 (VVM) is removed in mature form.

This sequence belongs to the HIPP family.

It localises to the nucleus. It is found in the nucleolus. Its subcellular location is the cytoplasm. In terms of biological role, heavy-metal-binding protein. Binds high amounts of zinc. May act as an upstream regulator of the salicylate-dependent pathogen response. Involved in abiotic stress responses, and seed and flower development. In Arabidopsis thaliana (Mouse-ear cress), this protein is Heavy metal-associated isoprenylated plant protein 3.